The sequence spans 115 residues: Thionin-like protein 2 (115 aa).

A signal peptide spans 1 to 20; the sequence is MLVAVMIVMVIGNLLAQTAA.

Belongs to the plant thionin (TC 1.C.44) family. In terms of processing, is disulfide-linked.

It is found in the secreted. Its function is as follows. May be involved in plant defense. This Arabidopsis thaliana (Mouse-ear cress) protein is Thionin-like protein 2.